We begin with the raw amino-acid sequence, 317 residues long: Malate dehydrogenase (317 aa).

NAD(+) contacts are provided by residues 10 to 15 (GGGQIG) and Asp-34. Residues Arg-83 and Arg-89 each contribute to the substrate site. NAD(+) contacts are provided by residues Asn-96 and 119–121 (ISN). 2 residues coordinate substrate: Asn-121 and Arg-152. Residue His-176 is the Proton acceptor of the active site.

Belongs to the LDH/MDH superfamily. MDH type 3 family.

It carries out the reaction (S)-malate + NAD(+) = oxaloacetate + NADH + H(+). Its function is as follows. Catalyzes the reversible oxidation of malate to oxaloacetate. The chain is Malate dehydrogenase from Citrifermentans bemidjiense (strain ATCC BAA-1014 / DSM 16622 / JCM 12645 / Bem) (Geobacter bemidjiensis).